A 121-amino-acid chain; its full sequence is RxLR effector protein PexRD2 (121 aa).

Residues 1–20 (MRLSYVIVVIATSFLVTTEA) form the signal peptide. The RxLR-dEER motif lies at 38–56 (RLLRKHYTAAENDDDSEAR). Residues 57–121 (ALNTEKMKTM…LNYVAEHTAV (65 aa)) form a WY domain region.

This sequence belongs to the RxLR effector family. In terms of assembly, homodimer. Interacts with host MAPKKK epsilon (via its kinase domain).

The protein resides in the secreted. The protein localises to the host cytoplasm. It is found in the host nucleus. Functionally, effector that enhances P.infestans colonization of Nicotiana benthamiana leaves. Induces a weak Cell death response in N.benthamiana. PexRD2-induced cell death is dependent on SGT1, suggesting that PexRD2 is recognized by the plant immune system. Interacts with the kinase domain of the host MAPKKK epsilon, a positive regulator of cell death associated with plant immunity, and perturbs signaling pathways triggered by MAPKKK epsilon. This chain is RxLR effector protein PexRD2, found in Phytophthora infestans (strain T30-4) (Potato late blight agent).